The primary structure comprises 595 residues: DNA-binding protein REB1 (595 aa).

Basic and acidic residues-rich tracts occupy residues 25–46 and 54–71; these read KSGEDDAVNKQKSVDWFLKEQD and DPGRDQDQEDNAKHRDAN. A disordered region spans residues 25–208; it reads KSGEDDAVNK…IDDHVDDVSV (184 aa). Residues 75 to 84 are compositionally biased toward low complexity; the sequence is AVAAAAVAAA. Positions 114 to 123 are enriched in basic residues; it reads KKSKKNKNKL. Polar residues predominate over residues 163-176; it reads NIASQHPDFQQYLN. The span at 182–205 shows a compositional bias: basic and acidic residues; that stretch reads EPKKEKSEERSYGDLSNIDDHVDD. One can recognise an HTH myb-type domain in the interval 333-384; sequence HIFEQRGKWTPEEDAELARWCAEKEGQWSNIGKVLGRMPEDCRDRWRNYVKC. The segment at residues 360-382 is a DNA-binding region (H-T-H motif); the sequence is WSNIGKVLGRMPEDCRDRWRNYV. The 106-residue stretch at 385-490 folds into the Myb-like domain; that stretch reads GPNRAANKWS…QCRYKWNKLL (106 aa). The tract at residues 414–456 is disordered; it reads TAYEDGEDDEMKDSSTKIEDSGDADMLDVQDSDKKPSISNSKK. A compositionally biased stretch (acidic residues) spans 434 to 443; sequence SGDADMLDVQ.

Its subcellular location is the nucleus. DNA-binding protein that recognizes sites within both the enhancer and the promoter of rRNA transcription, as well as upstream of many genes transcribed by RNA polymerase II. It is essential for cell growth. May stimulate or inhibit transcription. Specifically recognizes the sequence 5'-CCGGGTA-3' or 5'-CGGGTRR-3' (where R is any purine). This Kluyveromyces lactis (strain ATCC 8585 / CBS 2359 / DSM 70799 / NBRC 1267 / NRRL Y-1140 / WM37) (Yeast) protein is DNA-binding protein REB1 (REB1).